A 1021-amino-acid polypeptide reads, in one-letter code: Probable LRR receptor-like serine/threonine-protein kinase RFK1 (1021 aa).

Residues 1-39 (MISLYQILAEKKKKKKNDLNIFAFSVFAIICFKFYSVNA) form the signal peptide. Residues 41–625 (KLPQQEVDAL…PKTGMSPGAY (585 aa)) are Extracellular-facing. Asn-96 carries N-linked (GlcNAc...) asparagine glycosylation. 2 LRR repeats span residues 99–122 (DCHV…IVKL) and 123–146 (PYLR…WASS). N-linked (GlcNAc...) asparagine glycans are attached at residues Asn-136, Asn-147, and Asn-168. LRR repeat units lie at residues 148–168 (LTFI…EFGN), 169–192 (SSLT…LGNL), 193–216 (VHLK…LARL), 218–240 (NMTD…IQNW), and 241–266 (KQLE…VLSN). Asn-218 carries an N-linked (GlcNAc...) asparagine glycan. Asn-287 and Asn-300 each carry an N-linked (GlcNAc...) asparagine glycan. LRR repeat units lie at residues 288-312 (VTGL…LSHL), 313-336 (KELE…AQAE), 338-359 (LRFI…LLRD), and 361-381 (ITVD…RACR). 2 N-linked (GlcNAc...) asparagine glycosylation sites follow: Asn-486 and Asn-512. Residues 626-646 (IAIGIGAPCLIIFILGFLWIC) form a helical membrane-spanning segment. The Cytoplasmic segment spans residues 647 to 1021 (GCLPRCGRQR…QERKKEESRP (375 aa)). Thr-670 bears the Phosphothreonine mark. Positions 681–956 (FNPTNKIGEG…EVVAMLEGLY (276 aa)) constitute a Protein kinase domain. ATP contacts are provided by residues 687–695 (IGEGGFGAV) and Lys-709. Tyr-754 carries the phosphotyrosine modification. Residue Asp-807 is the Proton acceptor of the active site. Ser-840 is subject to Phosphoserine. Phosphothreonine is present on residues Thr-841 and Thr-846. Phosphotyrosine is present on Tyr-854. Positions 985 to 1021 (ENNSKTQCSVKSYPSSSSTSSGAGQAVQERKKEESRP) are disordered. Residues 993 to 1005 (SVKSYPSSSSTSS) are compositionally biased toward low complexity. Residues 1012–1021 (QERKKEESRP) show a composition bias toward basic and acidic residues.

It belongs to the protein kinase superfamily. Ser/Thr protein kinase family. Mostly expressed in flower buds, especially in stamens.

The protein localises to the membrane. The catalysed reaction is L-seryl-[protein] + ATP = O-phospho-L-seryl-[protein] + ADP + H(+). It catalyses the reaction L-threonyl-[protein] + ATP = O-phospho-L-threonyl-[protein] + ADP + H(+). In Arabidopsis thaliana (Mouse-ear cress), this protein is Probable LRR receptor-like serine/threonine-protein kinase RFK1 (RKF1).